A 491-amino-acid chain; its full sequence is Cytochrome P450 2K3 (491 aa).

C434 provides a ligand contact to heme.

The protein belongs to the cytochrome P450 family. It depends on heme as a cofactor.

The protein resides in the endoplasmic reticulum membrane. It is found in the microsome membrane. It catalyses the reaction an organic molecule + reduced [NADPH--hemoprotein reductase] + O2 = an alcohol + oxidized [NADPH--hemoprotein reductase] + H2O + H(+). The protein is Cytochrome P450 2K3 (cyp2k3) of Oncorhynchus mykiss (Rainbow trout).